The following is a 60-amino-acid chain: Sec-independent protein translocase protein TatA (60 aa).

The chain crosses the membrane as a helical span at residues 1–21; the sequence is MLSNIGVPGLILILVIALVIF.

The protein belongs to the TatA/E family. As to quaternary structure, forms a complex with TatC.

Its subcellular location is the cell membrane. Functionally, part of the twin-arginine translocation (Tat) system that transports large folded proteins containing a characteristic twin-arginine motif in their signal peptide across membranes. TatA could form the protein-conducting channel of the Tat system. The sequence is that of Sec-independent protein translocase protein TatA from Anoxybacillus flavithermus (strain DSM 21510 / WK1).